The chain runs to 281 residues: NAD kinase (281 aa).

Asp61 serves as the catalytic Proton acceptor. NAD(+) contacts are provided by residues 61–62, 134–135, Arg145, Asp164, 175–180, and Gln234; these read DG, ND, and TAYSLS.

The protein belongs to the NAD kinase family. The cofactor is a divalent metal cation.

The protein resides in the cytoplasm. The catalysed reaction is NAD(+) + ATP = ADP + NADP(+) + H(+). In terms of biological role, involved in the regulation of the intracellular balance of NAD and NADP, and is a key enzyme in the biosynthesis of NADP. Catalyzes specifically the phosphorylation on 2'-hydroxyl of the adenosine moiety of NAD to yield NADP. This is NAD kinase from Clostridium botulinum (strain 657 / Type Ba4).